The primary structure comprises 516 residues: Putative Rieske 2Fe-2S iron-sulfur protein MT3926 (516 aa).

A Rieske domain is found at 429–516 (LYTFFKCLTD…RGHQLRSSRP (88 aa)). C469, H471, C489, and H492 together coordinate [2Fe-2S] cluster.

It depends on [2Fe-2S] cluster as a cofactor.

The chain is Putative Rieske 2Fe-2S iron-sulfur protein MT3926 from Mycobacterium tuberculosis (strain CDC 1551 / Oshkosh).